A 217-amino-acid polypeptide reads, in one-letter code: 3,4-dihydroxy-2-butanone 4-phosphate synthase (217 aa).

D-ribulose 5-phosphate contacts are provided by residues 37–38 (RE), Asp-42, 150–154 (RQGHT), and Glu-174. Glu-38 provides a ligand contact to Mg(2+). His-153 contributes to the Mg(2+) binding site.

It belongs to the DHBP synthase family. In terms of assembly, homodimer. Mg(2+) is required as a cofactor. It depends on Mn(2+) as a cofactor.

It catalyses the reaction D-ribulose 5-phosphate = (2S)-2-hydroxy-3-oxobutyl phosphate + formate + H(+). It functions in the pathway cofactor biosynthesis; riboflavin biosynthesis; 2-hydroxy-3-oxobutyl phosphate from D-ribulose 5-phosphate: step 1/1. Catalyzes the conversion of D-ribulose 5-phosphate to formate and 3,4-dihydroxy-2-butanone 4-phosphate. This Photorhabdus laumondii subsp. laumondii (strain DSM 15139 / CIP 105565 / TT01) (Photorhabdus luminescens subsp. laumondii) protein is 3,4-dihydroxy-2-butanone 4-phosphate synthase.